The following is a 618-amino-acid chain: Probable Xaa-Pro aminopeptidase P (618 aa).

The Mn(2+) site is built by aspartate 414, aspartate 425, glutamate 523, and glutamate 537.

The protein belongs to the peptidase M24B family. The cofactor is Mn(2+).

It catalyses the reaction Release of any N-terminal amino acid, including proline, that is linked to proline, even from a dipeptide or tripeptide.. In terms of biological role, catalyzes the removal of a penultimate prolyl residue from the N-termini of peptides. This Metarhizium acridum (strain CQMa 102) protein is Probable Xaa-Pro aminopeptidase P (AMPP).